Consider the following 241-residue polypeptide: DnaA regulatory inactivator Hda (241 aa).

This sequence belongs to the DnaA family. HdA subfamily. In terms of assembly, the active form seems to be an ADP-bound monomer. Forms the RIDA complex (regulatory inactivation of DnaA) of ATP-DnaA, ADP-Hda and the DNA-loaded beta sliding clamp (dnaN).

Functionally, mediates the interaction of DNA replication initiator protein DnaA with DNA polymerase subunit beta sliding clamp (dnaN). Stimulates hydrolysis of ATP-DnaA to ADP-DnaA, rendering DnaA inactive for reinitiation, a process called regulatory inhibition of DnaA or RIDA. The chain is DnaA regulatory inactivator Hda from Salmonella agona (strain SL483).